We begin with the raw amino-acid sequence, 709 residues long: MNPIVKQFKYGQHTVTLETGAIARQATAAVMASMDDTTVFVTVVAKKDVKEGQDFFPLTVNYQERTYAAGKIPGGFFKREGRPSEGETLIARLIDRPIRPLFPEGFFNEIQVVATVVSVNPQISPDLVAMIGASAALTLSGVPFNGPIGAVRVGFIDNQFVLNPTMAEQKQSRLDLVVAGTDKAVLMVESEADILTEEQMLAAVVFGHQQQQVVIEAIKEFAKEAGKPRWDWVAPQPNTDLINKVKAIAEARLGDAYRITEKQLRYEQIDAIKADVIAQITAEDEEINEGKIVDIFTALESQIVRGRIIAGEPRIDGRTVDTVRALDICTGVLPRTHGSAIFTRGETQALAVATLGTERDAQIIDELTGERQDHFLFHYNFPPYSVGETGMIGSPKRREIGHGRLAKRGVAAVMPSLAEFPYVVRVVSEITESNGSSSMASVCGASLALMDAGVPIKAAVAGIAMGLVKEEEKFVVLSDILGDEDHLGDMDFKVAGTREGVTALQMDIKIEGITPEIMQIALNQAKSARMHILGVMEQAIPAPRADISDYAPRIYTMKIDPKKIKDVIGKGGATIRSLTEETGTSIDIDDDGTVKIAAVDSNAAKNVMGRIEEIVAEVEAGAIYKGKVTRLADFGAFVAIVGNKEGLVHISQIAEERVEKVSDYLQVGQEVNVKVVEIDRQGRIRLTMKDLAPKQETEINQEDSVEEQE.

Residues D485 and D491 each contribute to the Mg(2+) site. The 60-residue stretch at 552–611 folds into the KH domain; it reads PRIYTMKIDPKKIKDVIGKGGATIRSLTEETGTSIDIDDDGTVKIAAVDSNAAKNVMGRI. Residues 621-689 enclose the S1 motif domain; that stretch reads GAIYKGKVTR…RQGRIRLTMK (69 aa).

It belongs to the polyribonucleotide nucleotidyltransferase family. Component of the RNA degradosome, which is a multiprotein complex involved in RNA processing and mRNA degradation. Mg(2+) serves as cofactor.

It localises to the cytoplasm. It carries out the reaction RNA(n+1) + phosphate = RNA(n) + a ribonucleoside 5'-diphosphate. Involved in mRNA degradation. Catalyzes the phosphorolysis of single-stranded polyribonucleotides processively in the 3'- to 5'-direction. The chain is Polyribonucleotide nucleotidyltransferase from Haemophilus influenzae (strain PittGG).